The following is a 211-amino-acid chain: MQSALFLAVQHECGPMDKGAGTGPKNEEKREKMKRTLLKDWKSRLSYFLQNSSSPGKPKTGKKSKQQTFIKPSPEEAQLWSEAFDELLASKYGLAAFRAFLKSEFCEENIEFWLACEDFKKTKSPQKLSSKAKKIYTDFIEKEAPKEINIDFQTKSLIAQNIQEATSGCFTTAQKRVYSLMENNSYPRFLESEFYQDLCKKPQITTEPHAT.

2 disordered regions span residues 14 to 33 (GPMDKGAGTGPKNEEKREKM) and 49 to 71 (LQNSSSPGKPKTGKKSKQQTFIK). The segment at 32 to 66 (KMKRTLLKDWKSRLSYFLQNSSSPGKPKTGKKSKQ) is necessary for membrane association. Residues 79-116 (LWSEAFDELLASKYGLAAFRAFLKSEFCEENIEFWLAC) are necessary to inhibit protein synthesis. In terms of domain architecture, RGS spans 83 to 199 (AFDELLASKY…LESEFYQDLC (117 aa)).

In terms of assembly, interacts with GNAQ. Does not interact with GNAI1 and GNAI3. Interacts with EIF2B5. Interacts with PRKG1 (isoform alpha). In terms of processing, phosphorylated by protein kinase C. Phosphorylation by PRKG1 leads to activation of RGS2 activity.

It localises to the cell membrane. The protein localises to the cytoplasm. Its subcellular location is the nucleus. The protein resides in the nucleolus. Its function is as follows. Regulates G protein-coupled receptor signaling cascades. Inhibits signal transduction by increasing the GTPase activity of G protein alpha subunits, thereby driving them into their inactive GDP-bound form. It is involved in the negative regulation of the angiotensin-activated signaling pathway. Plays a role in the regulation of blood pressure in response to signaling via G protein-coupled receptors and GNAQ. Plays a role in regulating the constriction and relaxation of vascular smooth muscle. Binds EIF2B5 and blocks its activity, thereby inhibiting the translation of mRNA into protein. This chain is Regulator of G-protein signaling 2 (RGS2), found in Bos taurus (Bovine).